The following is a 486-amino-acid chain: tRNA sulfurtransferase (486 aa).

Positions 63-167 (DAFAERLGCI…HEKLYMVVRR (105 aa)) constitute a THUMP domain. ATP contacts are provided by residues 185 to 186 (LI), lysine 267, glycine 289, and glutamine 298. Cysteine 346 and cysteine 460 are joined by a disulfide. The Rhodanese domain occupies 408-486 (VDTQEVVIDI…GYTNVKVYRP (79 aa)). Cysteine 460 acts as the Cysteine persulfide intermediate in catalysis.

This sequence belongs to the ThiI family.

It is found in the cytoplasm. It catalyses the reaction [ThiI sulfur-carrier protein]-S-sulfanyl-L-cysteine + a uridine in tRNA + 2 reduced [2Fe-2S]-[ferredoxin] + ATP + H(+) = [ThiI sulfur-carrier protein]-L-cysteine + a 4-thiouridine in tRNA + 2 oxidized [2Fe-2S]-[ferredoxin] + AMP + diphosphate. The catalysed reaction is [ThiS sulfur-carrier protein]-C-terminal Gly-Gly-AMP + S-sulfanyl-L-cysteinyl-[cysteine desulfurase] + AH2 = [ThiS sulfur-carrier protein]-C-terminal-Gly-aminoethanethioate + L-cysteinyl-[cysteine desulfurase] + A + AMP + 2 H(+). It participates in cofactor biosynthesis; thiamine diphosphate biosynthesis. Its function is as follows. Catalyzes the ATP-dependent transfer of a sulfur to tRNA to produce 4-thiouridine in position 8 of tRNAs, which functions as a near-UV photosensor. Also catalyzes the transfer of sulfur to the sulfur carrier protein ThiS, forming ThiS-thiocarboxylate. This is a step in the synthesis of thiazole, in the thiamine biosynthesis pathway. The sulfur is donated as persulfide by IscS. This chain is tRNA sulfurtransferase, found in Shewanella denitrificans (strain OS217 / ATCC BAA-1090 / DSM 15013).